The chain runs to 492 residues: UPF0652 protein C22H10.08 (492 aa).

It belongs to the UPF0652 family.

It localises to the cytoplasm. It is found in the nucleus. The polypeptide is UPF0652 protein C22H10.08 (Schizosaccharomyces pombe (strain 972 / ATCC 24843) (Fission yeast)).